The primary structure comprises 230 residues: Large ribosomal subunit protein uL1 (230 aa).

It belongs to the universal ribosomal protein uL1 family. In terms of assembly, part of the 50S ribosomal subunit.

Binds directly to 23S rRNA. The L1 stalk is quite mobile in the ribosome, and is involved in E site tRNA release. In terms of biological role, protein L1 is also a translational repressor protein, it controls the translation of the L11 operon by binding to its mRNA. This Rhodopseudomonas palustris (strain BisB18) protein is Large ribosomal subunit protein uL1.